Reading from the N-terminus, the 151-residue chain is NADPH-dependent 7-cyano-7-deazaguanine reductase (151 aa).

The Thioimide intermediate role is filled by cysteine 51. Aspartate 58 functions as the Proton donor in the catalytic mechanism. Residues valine 73–serine 75 and histidine 92–glutamate 93 contribute to the substrate site.

It belongs to the GTP cyclohydrolase I family. QueF type 1 subfamily.

Its subcellular location is the cytoplasm. It catalyses the reaction 7-aminomethyl-7-carbaguanine + 2 NADP(+) = 7-cyano-7-deazaguanine + 2 NADPH + 3 H(+). It functions in the pathway tRNA modification; tRNA-queuosine biosynthesis. Functionally, catalyzes the NADPH-dependent reduction of 7-cyano-7-deazaguanine (preQ0) to 7-aminomethyl-7-deazaguanine (preQ1). This is NADPH-dependent 7-cyano-7-deazaguanine reductase from Bacteroides fragilis (strain ATCC 25285 / DSM 2151 / CCUG 4856 / JCM 11019 / LMG 10263 / NCTC 9343 / Onslow / VPI 2553 / EN-2).